The sequence spans 274 residues: NADPH-dependent 7-cyano-7-deazaguanine reductase (274 aa).

80–82 provides a ligand contact to substrate; sequence VES. 82–83 contacts NADPH; it reads SK. Cys181 (thioimide intermediate) is an active-site residue. Catalysis depends on Asp188, which acts as the Proton donor. Residue 220–221 coordinates substrate; the sequence is HE. 249–250 is an NADPH binding site; the sequence is RG.

It belongs to the GTP cyclohydrolase I family. QueF type 2 subfamily. As to quaternary structure, homodimer.

Its subcellular location is the cytoplasm. It catalyses the reaction 7-aminomethyl-7-carbaguanine + 2 NADP(+) = 7-cyano-7-deazaguanine + 2 NADPH + 3 H(+). It functions in the pathway tRNA modification; tRNA-queuosine biosynthesis. Its function is as follows. Catalyzes the NADPH-dependent reduction of 7-cyano-7-deazaguanine (preQ0) to 7-aminomethyl-7-deazaguanine (preQ1). The polypeptide is NADPH-dependent 7-cyano-7-deazaguanine reductase (Burkholderia pseudomallei (strain 1710b)).